We begin with the raw amino-acid sequence, 463 residues long: Cytochrome c-552 (463 aa).

The first 23 residues, 1–23 (MNVKSIALSAVIATSFLAAGAMA), serve as a signal peptide directing secretion. H83 contributes to the heme c binding site. Positions 111, 114, and 115 each coordinate heme. Residues C149, C152, H153, C191, C194, and H195 each coordinate heme c. Positions 197, 198, 246, and 248 each coordinate Ca(2+). A substrate-binding site is contributed by Y198. H249 serves as a coordination point for substrate. Residues H260, C267, C270, H271, H286, C299, C302, H303, and H378 each contribute to the heme c site.

Belongs to the cytochrome c-552 family. Ca(2+) serves as cofactor. It depends on heme c as a cofactor.

Its subcellular location is the periplasm. The enzyme catalyses 6 Fe(III)-[cytochrome c] + NH4(+) + 2 H2O = 6 Fe(II)-[cytochrome c] + nitrite + 8 H(+). The protein operates within nitrogen metabolism; nitrate reduction (assimilation). Catalyzes the reduction of nitrite to ammonia, consuming six electrons in the process. The chain is Cytochrome c-552 from Shewanella frigidimarina (strain NCIMB 400).